We begin with the raw amino-acid sequence, 231 residues long: Deoxyribose-phosphate aldolase (231 aa).

Residue D86 is the Proton donor/acceptor of the active site. K147 serves as the catalytic Schiff-base intermediate with acetaldehyde. K172 serves as the catalytic Proton donor/acceptor. Residues 206 to 231 (WQAETAGETVTEPESDRDGADTTDGY) are disordered.

Belongs to the DeoC/FbaB aldolase family. DeoC type 1 subfamily.

The protein localises to the cytoplasm. The enzyme catalyses 2-deoxy-D-ribose 5-phosphate = D-glyceraldehyde 3-phosphate + acetaldehyde. Its pathway is carbohydrate degradation; 2-deoxy-D-ribose 1-phosphate degradation; D-glyceraldehyde 3-phosphate and acetaldehyde from 2-deoxy-alpha-D-ribose 1-phosphate: step 2/2. Its function is as follows. Catalyzes a reversible aldol reaction between acetaldehyde and D-glyceraldehyde 3-phosphate to generate 2-deoxy-D-ribose 5-phosphate. In Haloarcula marismortui (strain ATCC 43049 / DSM 3752 / JCM 8966 / VKM B-1809) (Halobacterium marismortui), this protein is Deoxyribose-phosphate aldolase.